Consider the following 129-residue polypeptide: Small ribosomal subunit protein bS18c (129 aa).

The segment at 1 to 20 is disordered; that stretch reads MGTSNTQKPQKQVPKRKKYK.

It belongs to the bacterial ribosomal protein bS18 family. In terms of assembly, part of the 30S ribosomal subunit.

The protein resides in the plastid. It is found in the chloroplast. The chain is Small ribosomal subunit protein bS18c from Stigeoclonium helveticum (Green alga).